We begin with the raw amino-acid sequence, 176 residues long: Protein KleF (176 aa).

This Escherichia coli protein is Protein KleF (kleF).